Consider the following 305-residue polypeptide: tRNA uridine(34) hydroxylase (305 aa).

The Rhodanese domain maps to 136–230 (ADENTVVVDK…YLEEVPREQS (95 aa)). The active-site Cysteine persulfide intermediate is the cysteine 190.

It belongs to the TrhO family.

The catalysed reaction is uridine(34) in tRNA + AH2 + O2 = 5-hydroxyuridine(34) in tRNA + A + H2O. Catalyzes oxygen-dependent 5-hydroxyuridine (ho5U) modification at position 34 in tRNAs. The chain is tRNA uridine(34) hydroxylase from Brucella melitensis biotype 1 (strain ATCC 23456 / CCUG 17765 / NCTC 10094 / 16M).